A 694-amino-acid polypeptide reads, in one-letter code: Follicle-stimulating hormone receptor (694 aa).

A signal peptide spans 1-17; that stretch reads MAFLWISFLVFLGSGSG. 2 cysteine pairs are disulfide-bonded: Cys18–Cys25 and Cys23–Cys32. The LRRNT domain maps to 18–46; the sequence is CHHRICHCSDRVFICQESKVTEIPSDIPR. Residues 18–367 are Extracellular-facing; sequence CHHRICHCSD…EDIMGYNFLR (350 aa). LRR repeat units follow at residues 49 to 72, 73 to 97, 98 to 118, 119 to 143, 144 to 169, 170 to 192, 193 to 216, 217 to 240, and 241 to 259; these read VEMRFVLTKLQVIPRGAFSGFRDL, EKIEISQNDALEVIEADVFSNLPKL, HEIRIEKANNLVLIDPEAFWN, LPNLRYLLISNTGIKHLPAVYKIQS, HQKVLLDIQDNINIRTIERNSFAGLS, SESEILWLNKNGIQEIQNQAFNG, TQLDELNLSDNINLEDLPNGIFQG, ANGPVILDISRTRIHSLPSDGLKN, and LKKLKARSAYNFKTLPNLD. Residues Asn191 and Asn199 are each glycosylated (N-linked (GlcNAc...) asparagine). An N-linked (GlcNAc...) asparagine glycan is attached at Asn268. 4 cysteine pairs are disulfide-bonded: Cys275–Cys347, Cys276–Cys292, Cys276–Cys357, and Cys292–Cys339. The N-linked (GlcNAc...) asparagine glycan is linked to Asn293. Tyr336 is subject to Sulfotyrosine. A helical membrane pass occupies residues 368-388; sequence VLIWFISILSITGNIVVLVIL. Residues 389-399 are Cytoplasmic-facing; it reads ITSQYKLTVPR. The chain crosses the membrane as a helical span at residues 400 to 422; the sequence is FLMCNLAFADLCIGIYLLLIASV. Residues 423–444 lie on the Extracellular side of the membrane; it reads DIHTKSQYHNYAIDWQTGAGCD. A disulfide bridge links Cys443 with Cys518. The chain crosses the membrane as a helical span at residues 445–466; sequence AAGFFTVFASELSVYTLTAITL. At 467 to 486 the chain is on the cytoplasmic side; sequence ERWHTITYAMQLDRKVRLRH. A helical membrane pass occupies residues 487 to 509; that stretch reads AASIMLIGWIFAFSVALLPIFGV. Over 510 to 529 the chain is Extracellular; that stretch reads SSYMKVSICLPMDIDSPLSQ. Residues 530-551 form a helical membrane-spanning segment; the sequence is FYVISLLVLNVLASVIICTCYT. Topologically, residues 552–574 are cytoplasmic; it reads HIYFTVRNPNIISSTSDAKIAKR. A helical transmembrane segment spans residues 575–598; the sequence is MAMLIFTDFLCMAPISFFAISASV. Over 599–609 the chain is Extracellular; that stretch reads KMPLITVSKSK. Residues 610–631 form a helical membrane-spanning segment; that stretch reads ILLVLFYPINSCANPFLYAVFT. Residues 632-694 lie on the Cytoplasmic side of the membrane; sequence KTFRRDFFIL…YKLVPLNHLS (63 aa).

Belongs to the G-protein coupled receptor 1 family. FSH/LSH/TSH subfamily. In terms of assembly, homotrimer. Functions as a homotrimer binding the FSH hormone heterodimer composed of CGA and FSHB. Interacts with ARRB2. Interacts with APPL2; interaction is independent of follicle stimulating hormone stimulation. In terms of processing, N-glycosylated; indirectly required for FSH-binding, possibly via a conformational change that allows high affinity binding of hormone. Sulfated.

It is found in the cell membrane. Its function is as follows. G protein-coupled receptor for follitropin, the follicle-stimulating hormone. Through cAMP production activates the downstream PI3K-AKT and ERK1/ERK2 signaling pathways. The sequence is that of Follicle-stimulating hormone receptor (FSHR) from Notamacropus eugenii (Tammar wallaby).